Reading from the N-terminus, the 238-residue chain is Sugar fermentation stimulation protein homolog (238 aa).

Belongs to the SfsA family.

The chain is Sugar fermentation stimulation protein homolog from Histophilus somni (strain 2336) (Haemophilus somnus).